The sequence spans 80 residues: Serine rich endogenous peptide 18 (80 aa).

The N-terminal stretch at 1–25 (MYNVVVCLLTLSFLLLTGLSNTAEA) is a signal peptide. Residues 45–59 (KAEVGGSCSPHAHGR) carry the SCOOP motif motif. Positions 50–80 (GSCSPHAHGRGPPNRPGSSNIPGSPKRCTKP) are disordered. The SxS motif essential for MIK2 binding motif lies at 51-53 (SCS).

This sequence belongs to the serine rich endogenous peptide (SCOOP) phytocytokine family. Interacts with MIK2 (via extracellular leucine-rich repeat domain); this interaction triggers the formation of complex between MIK2 and the BAK1/SERK3 and SERK4 coreceptors, and subsequent BAK1 activation by phosphorylation.

The protein resides in the cell membrane. The protein localises to the secreted. It is found in the extracellular space. It localises to the apoplast. In terms of biological role, brassicaceae-specific phytocytokine (plant endogenous peptide released into the apoplast) perceived by MIK2 in a BAK1/SERK3 and SERK4 coreceptors-dependent manner, that modulates various physiological and antimicrobial processes including growth prevention and reactive oxygen species (ROS) response regulation. The sequence is that of Serine rich endogenous peptide 18 from Arabidopsis thaliana (Mouse-ear cress).